A 309-amino-acid chain; its full sequence is Shugoshin (309 aa).

Positions 42 to 77 form a coiled coil; the sequence is NLLLKQQVVQCTKTIEKLRNENVALRQKNQELIDGT. Disordered stretches follow at residues 165-195 and 210-309; these read FDNNSSQSTSSIQNAVNGTPRKKQSVGKGRR and EEAS…NTFF. Low complexity predominate over residues 167–178; it reads NNSSQSTSSIQN. Basic residues predominate over residues 184-193; it reads PRKKQSVGKG.

This sequence belongs to the shugoshin family. As to expression, expressed in gonads.

The protein localises to the nucleus. It localises to the chromosome. It is found in the centromere. Component of cell cycle checkpoints, which ensures chromosome segregation during meiosis and mitosis. During meiotic prophase, it is involved in the regulation of the synapsis checkpoint, which monitors whether homologous chromosomes have synapsed, and the DNA damage response. Plays a central role in chromosome cohesion during cell division by preventing premature dissociation of cohesin complex after prophase, when most of cohesin complex dissociates from chromosomes arms. The polypeptide is Shugoshin (Caenorhabditis elegans).